The following is a 962-amino-acid chain: Thrombospondin-3a (962 aa).

The N-terminal stretch at 1–23 (MEQMFVHIWVSLVVLMSVWSAQS) is a signal peptide. The Laminin G-like domain occupies 24 to 196 (DKKQDVPVID…MDTLKLALGG (173 aa)). Residues 277-318 (PRSRCQPNPCFKGVSCMETFEYPGYRCGPCPDGMTGNGTHCQ) enclose the EGF-like 1 domain. Cystine bridges form between C281–C292, C286–C303, C306–C317, C323–C335, C329–C344, C347–C371, C377–C390, C384–C399, C402–C414, C420–C434, C428–C444, C446–C457, C473–C480, C485–C505, C521–C541, C544–C564, C580–C600, C603–C623, C641–C661, and C684–C704. An N-linked (GlcNAc...) asparagine glycan is attached at N313. An EGF-like 2; calcium-binding domain is found at 319-358 (DIDECSEAQPCYTPGACVNTARGFTCESCPPGMWGPPLSG). In terms of domain architecture, EGF-like 3; calcium-binding spans 373-412 (DIDECVDLANACTPNSVCINIIGSFRCGQCKTGYVGNQTA). A glycan (N-linked (GlcNAc...) asparagine) is linked at N409. In terms of domain architecture, EGF-like 4 spans 416–458 (PRKSCSSLSFNPCDANAHCVMQRNGDVSCACNVGWAGNGHTCG). TSP type-3 repeat units lie at residues 459-493 (KDTDIDGYPDRSLPCMDNHKHCRQDNCVYTPNSGQ), 494-529 (EDADNDGIGDQCDEDADGDGIKNVEDNCRLVSNKDQ), 530-552 (QNSDTDSFGDACDNCPTVPNIDQ), 553-588 (KDTDSNGEGDACDDDIDGDGIQNVLDNCPKVPNPMQ), 589-611 (TDRDRDGVGDACDSCPEISNPMQ), 612-649 (TDVDNDLVGDVCDTNQDTDGDGHQDTRDNCPDIPNSSQ), 650-692 (LDSD…NPNQ), and 693-728 (KDSDSNGVGDVCENDFDNDSVMDLVDVCPESAEVTL). The disordered stretch occupies residues 548–704 (PNIDQKDTDS…SDSNGVGDVC (157 aa)). The span at 557–570 (SNGEGDACDDDIDG) shows a compositional bias: acidic residues. Residues 631-641 (GDGHQDTRDNC) show a composition bias toward basic and acidic residues. N-linked (GlcNAc...) asparagine glycosylation occurs at N646. The segment covering 652-669 (SDNDGIGDDCDEDDDNDG) has biased composition (acidic residues). N710 carries N-linked (GlcNAc...) asparagine glycosylation. C720 and C941 form a disulfide bridge. In terms of domain architecture, TSP C-terminal spans 732 to 946 (RAYQTVILDP…LRYRCNDTVP (215 aa)). N-linked (GlcNAc...) asparagine glycosylation occurs at N942.

The protein belongs to the thrombospondin family. As to quaternary structure, oligomer; disulfide-linked.

Functionally, adhesive glycoprotein that mediates cell-to-cell and cell-to-matrix interactions. Can bind to fibrinogen, fibronectin, laminin and type V collagen. This Danio rerio (Zebrafish) protein is Thrombospondin-3a (thbs3a).